The primary structure comprises 280 residues: 2-C-methyl-D-erythritol 4-phosphate cytidylyltransferase (280 aa).

The protein belongs to the IspD/TarI cytidylyltransferase family. IspD subfamily.

It catalyses the reaction 2-C-methyl-D-erythritol 4-phosphate + CTP + H(+) = 4-CDP-2-C-methyl-D-erythritol + diphosphate. It participates in isoprenoid biosynthesis; isopentenyl diphosphate biosynthesis via DXP pathway; isopentenyl diphosphate from 1-deoxy-D-xylulose 5-phosphate: step 2/6. Catalyzes the formation of 4-diphosphocytidyl-2-C-methyl-D-erythritol from CTP and 2-C-methyl-D-erythritol 4-phosphate (MEP). This Psychrobacter cryohalolentis (strain ATCC BAA-1226 / DSM 17306 / VKM B-2378 / K5) protein is 2-C-methyl-D-erythritol 4-phosphate cytidylyltransferase.